A 294-amino-acid chain; its full sequence is Acetylglutamate kinase (294 aa).

Residues 67–68 (GG), Arg89, and Asn193 contribute to the substrate site.

Belongs to the acetylglutamate kinase family. ArgB subfamily.

It localises to the cytoplasm. It carries out the reaction N-acetyl-L-glutamate + ATP = N-acetyl-L-glutamyl 5-phosphate + ADP. It participates in amino-acid biosynthesis; L-arginine biosynthesis; N(2)-acetyl-L-ornithine from L-glutamate: step 2/4. Functionally, catalyzes the ATP-dependent phosphorylation of N-acetyl-L-glutamate. This is Acetylglutamate kinase from Leptospira interrogans serogroup Icterohaemorrhagiae serovar copenhageni (strain Fiocruz L1-130).